A 187-amino-acid chain; its full sequence is Elongation factor P (187 aa).

It belongs to the elongation factor P family.

The protein resides in the cytoplasm. It participates in protein biosynthesis; polypeptide chain elongation. Its function is as follows. Involved in peptide bond synthesis. Stimulates efficient translation and peptide-bond synthesis on native or reconstituted 70S ribosomes in vitro. Probably functions indirectly by altering the affinity of the ribosome for aminoacyl-tRNA, thus increasing their reactivity as acceptors for peptidyl transferase. The protein is Elongation factor P of Erythrobacter litoralis (strain HTCC2594).